We begin with the raw amino-acid sequence, 185 residues long: UPF0149 protein XF_2010 (185 aa).

This sequence belongs to the UPF0149 family.

The polypeptide is UPF0149 protein XF_2010 (Xylella fastidiosa (strain 9a5c)).